The chain runs to 1136 residues: MADQIPLYPVRSAAAVAAANRKRAAYFSSAGPGPGADRPSRYQLEDESAHLDEMPLMMSEEGFENDESDYHTLPRARITRRKRGLEWFVCGGWKFLCTSCCDWLINICQRKRELKARTVWLGCPEKCEEKHPRNSIKNQKYNIFTFIPGVLYEQFKFFLNLYFLIVSCSQFVPALKIGYLYTYWAPLGFVLAVTIMREAVDEFRRFQRDKEVNSQLYSKLTVRGKVQVKSSDIQVGDLIIVEKNQRIPSDMVFLRTSEKAGSCFIRTDQLDGETDWKLKVAVSCTQRLPALGDLFSINAYVYAQKPQLDIHSFEGTFTREDSDPPVHESLSIENTLWASTVVASGTVIGVVIYTGKETRSVMNTSNPKNKVGLLDLELNQLTKALFLALVALSVVMVTLQGFAGPWYRSLFRFLLLFSYIIPISLRVNLDMGKAAYGWMIMRDEHIPGTVVRTSTIPEELGRLVYLLTDKTGTLTQNEMVFKRLHLGTVSYGTDTMDEIQNHLVNAYTQTQCQAGGSSAASTPPRKAPSSAPKVRRSVSSRVHEAVKAVALCHNVTPVYEARGAAGETEVAEADQDFSDDNRTYQASSPDEVALVQWTESVGLTLVSRDLTSMQLRTPGGQILTYCILQTFPFTSESKRMGVIVRDESTAEITFYMKGADVAMASIVQYNDWLEEECGNMAREGLRTLVVAKRALTEEQYQDFESRYNQAKLSLHDRTLKVAAVVESLEREMELLCLTGVEDQLQADVRPTLEMLRNAGIKIWMLTGDKLETATCIAKSSHLVSRTQDTHVFRPVTSRGEAHLELNAFRRKHDCALVISGDSLEVCLKYYEHEFVELACQCPAVVCCRCSPTQKAHIVKLLQQHTGRRTCAIGDGGNDVSMIQAADCGIGIEGKEGRQASLAADFSITRFKHVGRLLMVHGRSSYKRSAALGQFVMHRGLIISTMQAVFSSVFYFASVPLYQGFLMVGYATVYTMFPVFSLVLDQDVKPEMAMLYPELYKDLTKGRSLSFKTFLVWVLISIYQGGILMFGALVLFESEFVHVVAISFTALVLTELLMVALTVRTWHWLMVVAQLLSLGCYVASLAFLNEYFDVAFITTVTFVWKVSAITVVSCLPLYVLKYLKRKLSPPSYSKLSS.

Over 1–145 (MADQIPLYPV…IKNQKYNIFT (145 aa)) the chain is Cytoplasmic. A helical transmembrane segment spans residues 146-166 (FIPGVLYEQFKFFLNLYFLIV). Residues 167-174 (SCSQFVPA) are Extracellular-facing. Residues 175 to 195 (LKIGYLYTYWAPLGFVLAVTI) form a helical membrane-spanning segment. Residues 196-383 (MREAVDEFRR…LDLELNQLTK (188 aa)) lie on the Cytoplasmic side of the membrane. The chain crosses the membrane as a helical span at residues 384-404 (ALFLALVALSVVMVTLQGFAG). Topologically, residues 405–408 (PWYR) are extracellular. A helical membrane pass occupies residues 409–429 (SLFRFLLLFSYIIPISLRVNL). At 430–939 (DMGKAAYGWM…ALGQFVMHRG (510 aa)) the chain is on the cytoplasmic side. Residue aspartate 469 is the 4-aspartylphosphate intermediate of the active site. Residues aspartate 469, lysine 470, and threonine 471 each coordinate ATP. Residue aspartate 469 participates in Mg(2+) binding. Threonine 471 contacts Mg(2+). A disordered region spans residues 514 to 538 (AGGSSAASTPPRKAPSSAPKVRRSV). Positions 591, 633, 638, 657, 686, 687, 766, 767, 768, 848, and 854 each coordinate ATP. Aspartate 874 contacts Mg(2+). 2 residues coordinate ATP: asparagine 877 and aspartate 878. Mg(2+) is bound at residue aspartate 878. The chain crosses the membrane as a helical span at residues 940 to 960 (LIISTMQAVFSSVFYFASVPL). The Extracellular segment spans residues 961–962 (YQ). Residues 963-983 (GFLMVGYATVYTMFPVFSLVL) traverse the membrane as a helical segment. Over 984–1012 (DQDVKPEMAMLYPELYKDLTKGRSLSFKT) the chain is Cytoplasmic. The chain crosses the membrane as a helical span at residues 1013–1033 (FLVWVLISIYQGGILMFGALV). The Extracellular portion of the chain corresponds to 1034–1041 (LFESEFVH). A helical transmembrane segment spans residues 1042–1062 (VVAISFTALVLTELLMVALTV). Over 1063-1066 (RTWH) the chain is Cytoplasmic. A helical transmembrane segment spans residues 1067 to 1087 (WLMVVAQLLSLGCYVASLAFL). Residues 1088–1098 (NEYFDVAFITT) lie on the Extracellular side of the membrane. A helical membrane pass occupies residues 1099–1119 (VTFVWKVSAITVVSCLPLYVL). The Cytoplasmic segment spans residues 1120–1136 (KYLKRKLSPPSYSKLSS).

This sequence belongs to the cation transport ATPase (P-type) (TC 3.A.3) family. Type IV subfamily. Mg(2+) is required as a cofactor.

Its subcellular location is the golgi apparatus. The protein resides in the trans-Golgi network membrane. The catalysed reaction is ATP + H2O + phospholipidSide 1 = ADP + phosphate + phospholipidSide 2.. In Bos taurus (Bovine), this protein is Probable phospholipid-transporting ATPase IIB (ATP9B).